The following is a 448-amino-acid chain: Adenylosuccinate synthetase (448 aa).

Residues 36–42 (GDEGKGK) and 64–66 (GHT) contribute to the GTP site. Asp-37 serves as the catalytic Proton acceptor. Residues Asp-37 and Gly-64 each coordinate Mg(2+). IMP-binding positions include 37-40 (DEGK), 62-65 (NAGH), Thr-154, Arg-168, Asn-246, Thr-261, and Arg-325. His-65 acts as the Proton donor in catalysis. 321-327 (VTTKRKR) lines the substrate pocket. GTP is bound by residues Arg-327, 353–355 (KLD), and 436–438 (GVG).

The protein belongs to the adenylosuccinate synthetase family. In terms of assembly, homodimer. Requires Mg(2+) as cofactor.

It localises to the cytoplasm. The enzyme catalyses IMP + L-aspartate + GTP = N(6)-(1,2-dicarboxyethyl)-AMP + GDP + phosphate + 2 H(+). The protein operates within purine metabolism; AMP biosynthesis via de novo pathway; AMP from IMP: step 1/2. Its function is as follows. Plays an important role in the de novo pathway and in the salvage pathway of purine nucleotide biosynthesis. Catalyzes the first committed step in the biosynthesis of AMP from IMP. The protein is Adenylosuccinate synthetase of Drosophila virilis (Fruit fly).